Reading from the N-terminus, the 311-residue chain is Aspartate carbamoyltransferase catalytic subunit (311 aa).

Residues arginine 59 and threonine 60 each coordinate carbamoyl phosphate. Lysine 87 lines the L-aspartate pocket. Positions 109, 139, and 142 each coordinate carbamoyl phosphate. L-aspartate-binding residues include arginine 172 and arginine 224. 2 residues coordinate carbamoyl phosphate: alanine 265 and proline 266.

It belongs to the aspartate/ornithine carbamoyltransferase superfamily. ATCase family. As to quaternary structure, heterododecamer (2C3:3R2) of six catalytic PyrB chains organized as two trimers (C3), and six regulatory PyrI chains organized as three dimers (R2).

The enzyme catalyses carbamoyl phosphate + L-aspartate = N-carbamoyl-L-aspartate + phosphate + H(+). Its pathway is pyrimidine metabolism; UMP biosynthesis via de novo pathway; (S)-dihydroorotate from bicarbonate: step 2/3. Functionally, catalyzes the condensation of carbamoyl phosphate and aspartate to form carbamoyl aspartate and inorganic phosphate, the committed step in the de novo pyrimidine nucleotide biosynthesis pathway. The polypeptide is Aspartate carbamoyltransferase catalytic subunit (Streptococcus pyogenes serotype M1).